Consider the following 361-residue polypeptide: MYAIEERAHPPPPPPLSMDRIPPPSSSYPTPGSGGGMVSAGIPSSSHLAPLSTVHEGRIWSLQVVQQPIRARMCGFGDKDRRPITPPPCIRLIVKDAQTEKEIDINEIDTSFYVLMVDLWNAEGTNEVNLVKHSATSPSISTAMSSSYPPPPQTLSPTYAQYPQNAYGQPVPYPQMNSYYPGNPQLQYQNPYGASPQTSYYQPYYPTGGHMPQANISPAQPVSTGPGGMFTRNLIGSLSASAFRLTDPDNKIGVWFILQDLSVRTEGVFRLKMSFVNVGTQSSDSPNGGVSVINHGSAPVLASVFSEPFQVFSAKKFPGVIESTTLSKCFALQGIKIPIRKDGVKGSRGRNNDDDDGDDYD.

2 disordered regions span residues M1–S44 and S139–Q161. Positions P10–S26 are enriched in pro residues. Positions V54–R340 constitute a Velvet domain.

It belongs to the velvet family. VelB subfamily. As to quaternary structure, component of the heterotrimeric velvet complex composed of laeA, veA and velB; VeA acting as a bridging protein between laeA and velB. Forms a heterodimeric complex with vosA; the formation of the velB-vosA complex is light-dependent.

The protein localises to the nucleus. It is found in the cytoplasm. Component of the velvet transcription factor complex that controls sexual/asexual developmental ratio in response to light, promoting sexual development in the darkness while stimulating asexual sporulation under illumination. The velvet complex acts as a global regulator for secondary metabolite gene expression. Component of the velB-VosA heterodimeric complex that plays a dual role in activating genes associated with spore maturation and repressing certain development-associated genes. The velB-VosA complex binds DNA through the DNA-binding domain of vosA that recognizes an 11-nucleotide consensus sequence 5'-CTGGCCGCGGC-3' consisting of two motifs in the promoters of key developmental regulatory genes. Controls the expression of the aflatoxin gene cluster. Likely coordinates with fluG to modulate sclerotial production. The protein is Velvet complex subunit B of Aspergillus flavus (strain ATCC 200026 / FGSC A1120 / IAM 13836 / NRRL 3357 / JCM 12722 / SRRC 167).